The sequence spans 73 residues: Homeodomain-only protein (73 aa).

The homeobox; degenerate DNA-binding region spans 3–62 (AQTASGPTEDQVEILEYNFNKVNKHPDPTTLCLIAAEAGLTEEQTQKWFKQRLAEWRRSE).

Interacts with serum response factor (SRF). Component of a large complex containing histone deacetylases such as HDAC2. Interacts with the acetylated forms of HSPA1A and HSPA1B. Interacts with HSPA8. In terms of tissue distribution, expressed in the embryonic and adult heart and in the adult brain, liver, lung, skeletal muscle, intestine and spleen. Throughout embryonic and postnatal development, it is expressed in the myocardium.

Its subcellular location is the nucleus. It is found in the cytoplasm. Its function is as follows. Atypical homeodomain protein which does not bind DNA and is required to modulate cardiac growth and development. Acts via its interaction with SRF, thereby modulating the expression of SRF-dependent cardiac-specific genes and cardiac development. Prevents SRF-dependent transcription either by inhibiting SRF binding to DNA or by recruiting histone deacetylase (HDAC) proteins that prevent transcription by SRF. Overexpression causes cardiac hypertrophy. Acts as a co-chaperone for HSPA1A and HSPA1B chaperone proteins and assists in chaperone-mediated protein refolding. This Mus musculus (Mouse) protein is Homeodomain-only protein (Hopx).